A 597-amino-acid chain; its full sequence is Elongation factor 4 (597 aa).

One can recognise a tr-type G domain in the interval 2 to 184; it reads KHIRNFSIIA…KIVSAIPAPE (183 aa). Residues 14 to 19 and 131 to 134 contribute to the GTP site; these read DHGKST and NKID.

The protein belongs to the TRAFAC class translation factor GTPase superfamily. Classic translation factor GTPase family. LepA subfamily.

Its subcellular location is the cell inner membrane. It catalyses the reaction GTP + H2O = GDP + phosphate + H(+). In terms of biological role, required for accurate and efficient protein synthesis under certain stress conditions. May act as a fidelity factor of the translation reaction, by catalyzing a one-codon backward translocation of tRNAs on improperly translocated ribosomes. Back-translocation proceeds from a post-translocation (POST) complex to a pre-translocation (PRE) complex, thus giving elongation factor G a second chance to translocate the tRNAs correctly. Binds to ribosomes in a GTP-dependent manner. The protein is Elongation factor 4 of Vibrio vulnificus (strain CMCP6).